The following is a 41-amino-acid chain: Augerpeptide hhe6.1 (41 aa).

3 disulfide bridges follow: Cys11/Cys32, Cys18/Cys35, and Cys31/Cys40.

Expressed by the venom duct.

It localises to the secreted. This Hastula hectica (Sea snail) protein is Augerpeptide hhe6.1.